Consider the following 135-residue polypeptide: HTH-type transcriptional repressor RghR (135 aa).

One can recognise an HTH cro/C1-type domain in the interval 8-63; the sequence is LRALREERKLTVNQLATYSGVSAAGISRIENGKRGVPKPATIKKLAEALKIPYEGL. The H-T-H motif DNA-binding region spans 19-38; the sequence is VNQLATYSGVSAAGISRIEN.

Functionally, represses the expression of yvaM and both rapG and rapH. Binds directly to the promoter regions of yvaM, rapG and rapH. The polypeptide is HTH-type transcriptional repressor RghR (rghR) (Bacillus subtilis (strain 168)).